We begin with the raw amino-acid sequence, 956 residues long: DNA replication helicase (956 aa).

120–127 (GTAGAGKT) contributes to the ATP binding site. A disordered region spans residues 658–694 (PINNHVDADSSQGGQSVPVSQRMEHGQEETHDIPCLS). The segment covering 667–678 (SSQGGQSVPVSQ) has biased composition (low complexity). Residues 679 to 694 (RMEHGQEETHDIPCLS) show a composition bias toward basic and acidic residues.

The protein belongs to the herpesviridae helicase family. In terms of assembly, associates with the primase and the primase-associated factor to form the helicase-primase complex.

The protein localises to the host nucleus. Functionally, component of the helicase/primase complex. Unwinds the DNA at the replication forks and generates single-stranded DNA for both leading and lagging strand synthesis. The primase synthesizes short RNA primers on the lagging strand that the polymerase elongates using dNTPs. Possesses helicase-like motifs and therefore may act as the helicase subunit of the complex. In Human cytomegalovirus (strain Merlin) (HHV-5), this protein is DNA replication helicase.